A 215-amino-acid polypeptide reads, in one-letter code: UPF0502 protein YceH (215 aa).

Lys80 carries the N6-acetyllysine modification.

Belongs to the UPF0502 family.

The sequence is that of UPF0502 protein YceH from Escherichia coli O127:H6 (strain E2348/69 / EPEC).